We begin with the raw amino-acid sequence, 462 residues long: BPI fold-containing family B member 2 (462 aa).

The N-terminal stretch at 1–22 (MARACSLGLLLLLLLLLRTVVT) is a signal peptide. A Phosphothreonine modification is found at threonine 55. Serine 63 is subject to Phosphoserine. Residue asparagine 99 is glycosylated (N-linked (GlcNAc...) asparagine). A disulfide bond links cysteine 140 and cysteine 177. 2 N-linked (GlcNAc...) asparagine glycosylation sites follow: asparagine 297 and asparagine 336.

The protein belongs to the BPI/LBP/Plunc superfamily. BPI/LBP family.

The protein resides in the secreted. In Mus musculus (Mouse), this protein is BPI fold-containing family B member 2 (Bpifb2).